Consider the following 440-residue polypeptide: Chromosome partition protein MukF (440 aa).

Residues 208-236 are leucine-zipper; that stretch reads LSETSGTLRELQDTLEAAGDKLQANLLRI.

This sequence belongs to the MukF family. In terms of assembly, interacts, and probably forms a ternary complex, with MukE and MukB via its C-terminal region. The complex formation is stimulated by calcium or magnesium. It is required for an interaction between MukE and MukB.

It is found in the cytoplasm. Its subcellular location is the nucleoid. Functionally, involved in chromosome condensation, segregation and cell cycle progression. May participate in facilitating chromosome segregation by condensation DNA from both sides of a centrally located replisome during cell division. Not required for mini-F plasmid partitioning. Probably acts via its interaction with MukB and MukE. Overexpression results in anucleate cells. It has a calcium binding activity. The chain is Chromosome partition protein MukF from Serratia proteamaculans (strain 568).